A 366-amino-acid polypeptide reads, in one-letter code: Peptide chain release factor 1 (366 aa).

Glutamine 239 bears the N5-methylglutamine mark.

The protein belongs to the prokaryotic/mitochondrial release factor family. In terms of processing, methylated by PrmC. Methylation increases the termination efficiency of RF1.

It is found in the cytoplasm. Functionally, peptide chain release factor 1 directs the termination of translation in response to the peptide chain termination codons UAG and UAA. The polypeptide is Peptide chain release factor 1 (Baumannia cicadellinicola subsp. Homalodisca coagulata).